Consider the following 248-residue polypeptide: MIVLVTGATAGFGECITRRFIQQGHKVIATGRRQERLQELKDELGDNLYIAQLDVRNRAAIEEMLASLPAEWSNIDILVNNAGLALGMEPAHKASIEDWETMIDTNNKGLVYMTRAVLPGMVERNHGHIINIGSTAGSWPYAGGNVYGATKAFVRQFSLNLRTDLHGTAVRVTDIEPGLVGGTEFSNVRFKGDDGKAEKTYQNTVALTPEDVSEAVWWVSTLPAHVNINTLEMMPVTQSYAGLNVHRQ.

NADP(+) contacts are provided by residues 7-12 (GATAGF), 32-33 (RR), 54-55 (DV), and Asn81. Ser134 is a binding site for substrate. Residues Tyr147, Lys151, and 177-185 (PGLVGGTEF) each bind NADP(+). Tyr147 (proton acceptor) is an active-site residue.

The protein belongs to the short-chain dehydrogenases/reductases (SDR) family. In terms of assembly, homotetramer.

The enzyme catalyses 3-hydroxypropanoate + NADP(+) = 3-oxopropanoate + NADPH + H(+). The catalysed reaction is L-allo-threonine + NADP(+) = aminoacetone + CO2 + NADPH. Its function is as follows. NADP-dependent dehydrogenase with broad substrate specificity acting on 3-hydroxy acids. Catalyzes the NADP-dependent oxidation of L-allo-threonine to L-2-amino-3-keto-butyrate, which is spontaneously decarboxylated into aminoacetone. Also acts on D-threonine, L-serine, D-serine, D-3-hydroxyisobutyrate, L-3-hydroxyisobutyrate, D-glycerate and L-glycerate. Able to catalyze the reduction of the malonic semialdehyde to 3-hydroxypropionic acid. YdfG is apparently supplementing RutE, the presumed malonic semialdehyde reductase involved in pyrimidine degradation since both are able to detoxify malonic semialdehyde. The chain is NADP-dependent 3-hydroxy acid dehydrogenase YdfG from Escherichia coli O6:H1 (strain CFT073 / ATCC 700928 / UPEC).